The following is a 711-amino-acid chain: Polyribonucleotide nucleotidyltransferase (711 aa).

Mg(2+) contacts are provided by Asp-491 and Asp-497. The region spanning 559–618 (PRLITIKINPEKIRDVIGKGGAVIRALTEETGTQIDISDEGVVTIASVDAAAGQEAKRRI) is the KH domain. The S1 motif domain maps to 628-696 (GKIYEGTVLK…DRGRLKLSMK (69 aa)).

Belongs to the polyribonucleotide nucleotidyltransferase family. The cofactor is Mg(2+).

The protein resides in the cytoplasm. The catalysed reaction is RNA(n+1) + phosphate = RNA(n) + a ribonucleoside 5'-diphosphate. Involved in mRNA degradation. Catalyzes the phosphorolysis of single-stranded polyribonucleotides processively in the 3'- to 5'-direction. The polypeptide is Polyribonucleotide nucleotidyltransferase (Janthinobacterium sp. (strain Marseille) (Minibacterium massiliensis)).